We begin with the raw amino-acid sequence, 401 residues long: Pectate lyase (401 aa).

The N-terminal stretch at 1-20 (MATTILPLILFISSLAIASS) is a signal peptide. A glycan (N-linked (GlcNAc...) asparagine) is linked at Asn38. Residues Asp199, Asp223, and Asp227 each coordinate Ca(2+). Arg279 is an active-site residue.

Belongs to the polysaccharide lyase 1 family. Ca(2+) serves as cofactor. As to expression, expressed in sites of vascular differentiation and in new primordia on the flank of the shoot meristem.

It catalyses the reaction Eliminative cleavage of (1-&gt;4)-alpha-D-galacturonan to give oligosaccharides with 4-deoxy-alpha-D-galact-4-enuronosyl groups at their non-reducing ends.. The protein operates within glycan metabolism; pectin degradation; 2-dehydro-3-deoxy-D-gluconate from pectin: step 2/5. Involved in the degradation of pectin. May assist in the removal and modification of an existing pectin matrix in order to allow the deposition of newly synthesized walls polymers for a specialized function or to create an architecture that is extensible. The protein is Pectate lyase of Zinnia elegans (Garden zinnia).